The following is a 582-amino-acid chain: Regulatory solute carrier protein family 1 member 1 (582 aa).

Disordered regions lie at residues 1–32 (MSSL…ARSV), 56–76 (KASA…LQVL), 143–180 (EKSW…VPQD), 303–325 (VDMS…HGQP), 363–384 (VTCQ…SGRR), 390–409 (LTPS…SESG), 426–452 (ASTS…ESAR), and 483–529 (SEGA…LSTP). Positions 16 to 32 (SGQSPEVGSPTSLARSV) are enriched in polar residues. The span at 148–179 (PENQTPSPVNGLQQHRETGSVQREAGQQSVPQ) shows a compositional bias: polar residues. Over residues 390–408 (LTPSDQYSQGSCHQATSES) the composition is skewed to polar residues. 2 stretches are compositionally biased toward basic and acidic residues: residues 438–452 (SPDR…ESAR) and 490–503 (PSEH…DRPE). The region spanning 536–576 (IFPAADVDRILGAGFTLQEALGALHRVGGNADLALLVLLAK) is the UBA domain.

In terms of assembly, interacts with YRDC. As to expression, expressed in epithelial and subepithelial cells of small intestine.

Its subcellular location is the cell membrane. It is found in the nucleus. It localises to the golgi apparatus. The protein localises to the trans-Golgi network. Functionally, mediates transcriptional and post-transcriptional regulation of SLC5A1. Inhibits a dynamin and PKC-dependent exocytotic pathway of SLC5A1. Also involved in transcriptional regulation of SLC22A2. Exhibits glucose-dependent, short-term inhibition of SLC5A1 and SLC22A2 by inhibiting the release of vesicles from the trans-Golgi network. Regulates the expression of SLC5A1 in a tissue-specific manner and is specifically involved in its regulation in the small intestine. In Mus musculus (Mouse), this protein is Regulatory solute carrier protein family 1 member 1 (Rsc1a1).